A 336-amino-acid chain; its full sequence is Probable allantoicase 2 (336 aa).

It belongs to the allantoicase family.

It carries out the reaction allantoate + H2O = (S)-ureidoglycolate + urea. The protein operates within nitrogen metabolism; (S)-allantoin degradation; (S)-ureidoglycolate from allantoate (aminidohydrolase route): step 1/1. The protein is Probable allantoicase 2 of Burkholderia pseudomallei (strain K96243).